We begin with the raw amino-acid sequence, 231 residues long: ATP-dependent dethiobiotin synthetase BioD 2 (231 aa).

13–18 (SVGKTV) lines the ATP pocket. Thr17 is a Mg(2+) binding site. Lys38 is an active-site residue. Residues Asp55, 112 to 115 (EGTG), 172 to 173 (NR), 201 to 203 (PYL), and Gln208 contribute to the ATP site. Asp55 and Glu112 together coordinate Mg(2+).

This sequence belongs to the dethiobiotin synthetase family. As to quaternary structure, homodimer. It depends on Mg(2+) as a cofactor.

The protein resides in the cytoplasm. The enzyme catalyses (7R,8S)-7,8-diammoniononanoate + CO2 + ATP = (4R,5S)-dethiobiotin + ADP + phosphate + 3 H(+). The protein operates within cofactor biosynthesis; biotin biosynthesis; biotin from 7,8-diaminononanoate: step 1/2. In terms of biological role, catalyzes a mechanistically unusual reaction, the ATP-dependent insertion of CO2 between the N7 and N8 nitrogen atoms of 7,8-diaminopelargonic acid (DAPA, also called 7,8-diammoniononanoate) to form a ureido ring. This is ATP-dependent dethiobiotin synthetase BioD 2 from Salmonella typhi.